The following is a 465-amino-acid chain: Argininosuccinate lyase (465 aa).

This sequence belongs to the lyase 1 family. Argininosuccinate lyase subfamily.

It localises to the cytoplasm. It catalyses the reaction 2-(N(omega)-L-arginino)succinate = fumarate + L-arginine. It functions in the pathway amino-acid biosynthesis; L-arginine biosynthesis; L-arginine from L-ornithine and carbamoyl phosphate: step 3/3. The chain is Argininosuccinate lyase from Variovorax paradoxus (strain S110).